The primary structure comprises 161 residues: Phage-like element PBSX protein XkdI (161 aa).

The protein to B.subtilis YqbI.

In Bacillus subtilis (strain 168), this protein is Phage-like element PBSX protein XkdI (xkdI).